A 175-amino-acid polypeptide reads, in one-letter code: ATP synthase subunit b, chloroplastic (175 aa).

A helical transmembrane segment spans residues V22–G42.

The protein belongs to the ATPase B chain family. F-type ATPases have 2 components, F(1) - the catalytic core - and F(0) - the membrane proton channel. F(1) has five subunits: alpha(3), beta(3), gamma(1), delta(1), epsilon(1). F(0) has four main subunits: a(1), b(1), b'(1) and c(10-14). The alpha and beta chains form an alternating ring which encloses part of the gamma chain. F(1) is attached to F(0) by a central stalk formed by the gamma and epsilon chains, while a peripheral stalk is formed by the delta, b and b' chains.

Its subcellular location is the plastid. It localises to the chloroplast thylakoid membrane. Functionally, f(1)F(0) ATP synthase produces ATP from ADP in the presence of a proton or sodium gradient. F-type ATPases consist of two structural domains, F(1) containing the extramembraneous catalytic core and F(0) containing the membrane proton channel, linked together by a central stalk and a peripheral stalk. During catalysis, ATP synthesis in the catalytic domain of F(1) is coupled via a rotary mechanism of the central stalk subunits to proton translocation. Component of the F(0) channel, it forms part of the peripheral stalk, linking F(1) to F(0). This Chlamydomonas reinhardtii (Chlamydomonas smithii) protein is ATP synthase subunit b, chloroplastic.